Here is a 75-residue protein sequence, read N- to C-terminus: Large ribosomal subunit protein bL31 (75 aa).

This sequence belongs to the bacterial ribosomal protein bL31 family. Type A subfamily. As to quaternary structure, part of the 50S ribosomal subunit.

Its function is as follows. Binds the 23S rRNA. In Bradyrhizobium diazoefficiens (strain JCM 10833 / BCRC 13528 / IAM 13628 / NBRC 14792 / USDA 110), this protein is Large ribosomal subunit protein bL31.